The sequence spans 325 residues: tRNA U34 carboxymethyltransferase (325 aa).

Carboxy-S-adenosyl-L-methionine contacts are provided by residues Lys-91, Trp-105, Lys-110, Gly-130, 152-154 (DPS), Met-196, Tyr-200, and Arg-315.

Belongs to the class I-like SAM-binding methyltransferase superfamily. CmoB family. As to quaternary structure, homotetramer.

It catalyses the reaction carboxy-S-adenosyl-L-methionine + 5-hydroxyuridine(34) in tRNA = 5-carboxymethoxyuridine(34) in tRNA + S-adenosyl-L-homocysteine + H(+). Functionally, catalyzes carboxymethyl transfer from carboxy-S-adenosyl-L-methionine (Cx-SAM) to 5-hydroxyuridine (ho5U) to form 5-carboxymethoxyuridine (cmo5U) at position 34 in tRNAs. This chain is tRNA U34 carboxymethyltransferase, found in Aeromonas salmonicida (strain A449).